The primary structure comprises 591 residues: Aspartate--tRNA ligase (591 aa).

E171 serves as a coordination point for L-aspartate. An aspartate region spans residues 195–198 (QLFK). Position 217 (R217) interacts with L-aspartate. ATP contacts are provided by residues 217–219 (RDE) and Q226. An L-aspartate-binding site is contributed by H448. E482 contributes to the ATP binding site. R489 is a binding site for L-aspartate. An ATP-binding site is contributed by 534-537 (GLDR).

Belongs to the class-II aminoacyl-tRNA synthetase family. Type 1 subfamily. In terms of assembly, homodimer.

It is found in the cytoplasm. The catalysed reaction is tRNA(Asp) + L-aspartate + ATP = L-aspartyl-tRNA(Asp) + AMP + diphosphate. Functionally, catalyzes the attachment of L-aspartate to tRNA(Asp) in a two-step reaction: L-aspartate is first activated by ATP to form Asp-AMP and then transferred to the acceptor end of tRNA(Asp). In Aliivibrio salmonicida (strain LFI1238) (Vibrio salmonicida (strain LFI1238)), this protein is Aspartate--tRNA ligase.